The chain runs to 215 residues: Small ribosomal subunit protein uS5 (215 aa).

Over residues 1–12 the composition is skewed to gly residues; it reads MSGTQRRGGGAG. The interval 1–31 is disordered; that stretch reads MSGTQRRGGGAGGERRGRDNRRGQNDRNRNQ. Residues 13 to 31 show a composition bias toward basic and acidic residues; it reads GERRGRDNRRGQNDRNRNQ. An S5 DRBM domain is found at 34–97; sequence YLERVVAINR…EEAKKHFFKV (64 aa).

The protein belongs to the universal ribosomal protein uS5 family. Part of the 30S ribosomal subunit. Contacts proteins S4 and S8.

In terms of biological role, with S4 and S12 plays an important role in translational accuracy. Located at the back of the 30S subunit body where it stabilizes the conformation of the head with respect to the body. In Cutibacterium acnes (strain DSM 16379 / KPA171202) (Propionibacterium acnes), this protein is Small ribosomal subunit protein uS5.